The sequence spans 136 residues: Small ribosomal subunit protein uS9 (136 aa).

Residues threonine 111–arginine 136 are disordered. Basic residues predominate over residues lysine 117–arginine 136.

Belongs to the universal ribosomal protein uS9 family.

In Methylacidiphilum infernorum (isolate V4) (Methylokorus infernorum (strain V4)), this protein is Small ribosomal subunit protein uS9.